The primary structure comprises 1578 residues: Bromodomain-containing protein DDB_G0270170 (1578 aa).

A compositionally biased stretch (acidic residues) spans 1 to 12 (MSLEQQDETVVE). 4 disordered regions span residues 1 to 39 (MSLE…TYKE), 108 to 127 (NNNN…NNTE), 151 to 285 (HYSD…AKEL), and 319 to 454 (NENI…TTQT). Positions 18-35 (SFETNNSTANNTNNNTDN) are enriched in low complexity. A compositionally biased stretch (basic and acidic residues) spans 152-163 (YSDDESSKEKQD). Composition is skewed to low complexity over residues 164-185 (NINS…SENI) and 197-231 (TTPS…TTTN). Composition is skewed to polar residues over residues 319–332 (NENI…STTK) and 340–351 (TASTTNTPIITA). The span at 352–383 (QQNTTPLSPTQTTTTTTTPTTTTAQQNTPAQT) shows a compositional bias: low complexity. Polar residues predominate over residues 384–395 (ESKPPTTISINI). Low complexity-rich tracts occupy residues 396-407 (KGSKSPKTTGGK) and 417-433 (VVIS…VATT). A compositionally biased stretch (polar residues) spans 443-454 (STANNNSETTQT). A coiled-coil region spans residues 479-506 (SDSATIQQLQQSISMLEDKIRLISSNNK). Disordered regions lie at residues 543 to 565 (FTKS…YSDD) and 580 to 730 (IPIP…RMGK). Low complexity-rich tracts occupy residues 604–653 (NTST…PPQQ) and 660–686 (TQQE…DTTT). The Bromo domain maps to 735-841 (VVLTPVFKRC…DVFEKGFPKV (107 aa)). A coiled-coil region spans residues 851 to 903 (KNVDQEKIEKLSNDLKNVTKELEKFKKDDSNSINNNNNNNNNYNNNNNNNNNN). 4 disordered regions span residues 874 to 969 (KFKK…KVTT), 1039 to 1167 (HALP…NNNN), 1184 to 1452 (SIPE…TDSA), and 1480 to 1544 (EREE…KGNM). 3 stretches are compositionally biased toward low complexity: residues 881-911 (NSIN…SSRS), 918-961 (SSGS…SSNN), and 1047-1061 (SSTH…DSSS). An NET domain is found at 957–1039 (SSSNNKKYPK…QYKNGEIPQH (83 aa)). The segment covering 1064–1077 (REIEKLQKQLDRLG) has biased composition (basic and acidic residues). Positions 1092–1107 (HSKRISKPISKARGRK) are enriched in basic residues. The segment covering 1112-1167 (SSSNLNNSSNNINNNNNNINNYNNNNNYNNNNNNNLNNNNNNNINSNLNNNLNNNN) has biased composition (low complexity). Residues 1113–1150 (SSNLNNSSNNINNNNNNINNYNNNNNYNNNNNNNLNNN) adopt a coiled-coil conformation. The span at 1192-1204 (TDISESSDSESDS) shows a compositional bias: acidic residues. Low complexity-rich tracts occupy residues 1205–1218 (ESGS…YSDS) and 1231–1334 (YNNS…SLTN). The stretch at 1280–1308 (NSNNNNSNNNNNNVNNNNNNHNNNNHNNN) forms a coiled coil. Positions 1356–1369 (SVASWSFDPTNNKE) are enriched in polar residues. The segment covering 1370–1386 (SSSSSSTSSTSSTSNTT) has biased composition (low complexity). Over residues 1387–1399 (LTPIIQQSSLTHA) the composition is skewed to polar residues. 2 stretches are compositionally biased toward low complexity: residues 1400 to 1424 (SSPI…NNLS) and 1432 to 1451 (NSPS…NTDS). Residues 1462 to 1544 (TLKQKEKERV…EKLNNSKGNM (83 aa)) are a coiled coil. Residues 1480–1538 (EREEKEEELKKEEEKKRIEMEEIKRLAKEKEEREAEETRKQIESERAAAREAREKEKLN) show a composition bias toward basic and acidic residues.

This Dictyostelium discoideum (Social amoeba) protein is Bromodomain-containing protein DDB_G0270170.